A 227-amino-acid polypeptide reads, in one-letter code: Exodeoxyribonuclease (227 aa).

It carries out the reaction Exonucleolytic cleavage in the 3'- to 5'-direction to yield nucleoside 5'-phosphates.. 3'-5' exonuclease that preferentially uses ssDNA as substrate. Plays a role in group I intron homing. May play a role in the final step of host DNA degradation, by scavenging DNA into mononucleotides. This chain is Exodeoxyribonuclease (dexA), found in Escherichia coli (Bacteriophage T4).